We begin with the raw amino-acid sequence, 306 residues long: UPF0282 protein Pars_1056 (306 aa).

Belongs to the UPF0282 family.

The chain is UPF0282 protein Pars_1056 from Pyrobaculum arsenaticum (strain DSM 13514 / JCM 11321 / PZ6).